Here is a 226-residue protein sequence, read N- to C-terminus: Putative pyridoxamine 5'-phosphate oxidase (226 aa).

Position 16-19 (16-19 (LNSH)) interacts with pyridoxal 5'-phosphate. 72 to 75 (RMVL) serves as a coordination point for FMN. K77 contacts pyridoxal 5'-phosphate. FMN contacts are provided by residues 87-88 (YT), 93-94 (RK), and Q116. Y134, R138, and S142 together coordinate pyridoxal 5'-phosphate. Residues 151-152 (QS) and W199 contribute to the FMN site. 205–207 (RLH) contributes to the pyridoxal 5'-phosphate binding site. R209 is an FMN binding site.

It belongs to the pyridoxamine 5'-phosphate oxidase family. In terms of assembly, homodimer. FMN is required as a cofactor.

The enzyme catalyses pyridoxamine 5'-phosphate + O2 + H2O = pyridoxal 5'-phosphate + H2O2 + NH4(+). It catalyses the reaction pyridoxine 5'-phosphate + O2 = pyridoxal 5'-phosphate + H2O2. It functions in the pathway cofactor metabolism; pyridoxal 5'-phosphate salvage; pyridoxal 5'-phosphate from pyridoxamine 5'-phosphate: step 1/1. The protein operates within cofactor metabolism; pyridoxal 5'-phosphate salvage; pyridoxal 5'-phosphate from pyridoxine 5'-phosphate: step 1/1. Its function is as follows. Catalyzes the oxidation of either pyridoxine 5'-phosphate (PNP) or pyridoxamine 5'-phosphate (PMP) into pyridoxal 5'-phosphate (PLP). The sequence is that of Putative pyridoxamine 5'-phosphate oxidase from Caenorhabditis elegans.